Reading from the N-terminus, the 272-residue chain is HMP-PP phosphatase (272 aa).

The active-site Nucleophile is the Asp8. Mg(2+) contacts are provided by Asp8, Asp10, and Asp212.

Belongs to the HAD-like hydrolase superfamily. Cof family. The cofactor is Mg(2+).

It catalyses the reaction 4-amino-2-methyl-5-(diphosphooxymethyl)pyrimidine + H2O = 4-amino-2-methyl-5-(phosphooxymethyl)pyrimidine + phosphate + H(+). Functionally, catalyzes the hydrolysis of 4-amino-2-methyl-5-hydroxymethylpyrimidine pyrophosphate (HMP-PP) to 4-amino-2-methyl-5-hydroxymethylpyrimidine phosphate (HMP-P). This Escherichia coli O157:H7 protein is HMP-PP phosphatase.